We begin with the raw amino-acid sequence, 338 residues long: Acetylcholinesterase (338 aa).

Asparagine 8 carries N-linked (GlcNAc...) asparagine glycosylation. Catalysis depends on serine 99, which acts as the Acyl-ester intermediate. A disulfide bridge connects residues cysteine 153 and cysteine 164. Glutamate 226 acts as the Charge relay system in catalysis.

This sequence belongs to the type-B carboxylesterase/lipase family.

It is found in the synapse. Its subcellular location is the secreted. The protein localises to the cell membrane. It carries out the reaction acetylcholine + H2O = choline + acetate + H(+). In terms of biological role, terminates signal transduction at the neuromuscular junction by rapid hydrolysis of the acetylcholine released into the synaptic cleft. This is Acetylcholinesterase (ache) from Myxine glutinosa (Atlantic hagfish).